Reading from the N-terminus, the 552-residue chain is Non-structural protein NS1 (552 aa).

Belongs to the orbivirus non-structural protein NS1 family.

The protein is Non-structural protein NS1 (Segment-5) of Antilocapra americana (Pronghorn).